We begin with the raw amino-acid sequence, 370 residues long: Holliday junction branch migration complex subunit RuvB (370 aa).

The segment at 1–53 (MAILSSQKQPLEPEPSKNPQSVQQPGLPPSTPEQGLLTAEVSPEERLSRTDDI) is disordered. Positions 13 to 214 (PEPSKNPQSV…FGLIQRLRFY (202 aa)) are large ATPase domain (RuvB-L). Residues 43 to 53 (PEERLSRTDDI) show a composition bias toward basic and acidic residues. Residues I53, R54, G95, K98, T99, T100, 161–163 (EDF), R204, Y214, and R251 each bind ATP. T99 contributes to the Mg(2+) binding site. The segment at 215 to 285 (EPEELSQIIL…IASEALQLFN (71 aa)) is small ATPAse domain (RuvB-S). The tract at residues 288 to 370 (PCGLDWTDRR…TPPDGQLSLL (83 aa)) is head domain (RuvB-H). DNA is bound by residues R343 and R348.

Belongs to the RuvB family. As to quaternary structure, homohexamer. Forms an RuvA(8)-RuvB(12)-Holliday junction (HJ) complex. HJ DNA is sandwiched between 2 RuvA tetramers; dsDNA enters through RuvA and exits via RuvB. An RuvB hexamer assembles on each DNA strand where it exits the tetramer. Each RuvB hexamer is contacted by two RuvA subunits (via domain III) on 2 adjacent RuvB subunits; this complex drives branch migration. In the full resolvosome a probable DNA-RuvA(4)-RuvB(12)-RuvC(2) complex forms which resolves the HJ.

It is found in the cytoplasm. It carries out the reaction ATP + H2O = ADP + phosphate + H(+). Functionally, the RuvA-RuvB-RuvC complex processes Holliday junction (HJ) DNA during genetic recombination and DNA repair, while the RuvA-RuvB complex plays an important role in the rescue of blocked DNA replication forks via replication fork reversal (RFR). RuvA specifically binds to HJ cruciform DNA, conferring on it an open structure. The RuvB hexamer acts as an ATP-dependent pump, pulling dsDNA into and through the RuvAB complex. RuvB forms 2 homohexamers on either side of HJ DNA bound by 1 or 2 RuvA tetramers; 4 subunits per hexamer contact DNA at a time. Coordinated motions by a converter formed by DNA-disengaged RuvB subunits stimulates ATP hydrolysis and nucleotide exchange. Immobilization of the converter enables RuvB to convert the ATP-contained energy into a lever motion, pulling 2 nucleotides of DNA out of the RuvA tetramer per ATP hydrolyzed, thus driving DNA branch migration. The RuvB motors rotate together with the DNA substrate, which together with the progressing nucleotide cycle form the mechanistic basis for DNA recombination by continuous HJ branch migration. Branch migration allows RuvC to scan DNA until it finds its consensus sequence, where it cleaves and resolves cruciform DNA. This chain is Holliday junction branch migration complex subunit RuvB, found in Cyanothece sp. (strain PCC 7425 / ATCC 29141).